The chain runs to 539 residues: Probable protein kinase UbiB (539 aa).

Residues 23–43 (DLLFALPLPWWMLAVRFVLPW) traverse the membrane as a helical segment. One can recognise a Protein kinase domain in the interval 125-492 (RFDETPLASA…WHDRKDEPVL (368 aa)). Residues 131–139 (LASASVAQV) and Lys153 contribute to the ATP site. Asp288 functions as the Proton acceptor in the catalytic mechanism. 2 consecutive transmembrane segments (helical) span residues 494–514 (LIGA…SEAA) and 517–537 (LLTL…YLIV).

The protein belongs to the ABC1 family. UbiB subfamily.

It is found in the cell inner membrane. Its pathway is cofactor biosynthesis; ubiquinone biosynthesis [regulation]. In terms of biological role, is probably a protein kinase regulator of UbiI activity which is involved in aerobic coenzyme Q (ubiquinone) biosynthesis. The chain is Probable protein kinase UbiB from Pseudomonas syringae pv. tomato (strain ATCC BAA-871 / DC3000).